The sequence spans 319 residues: ATP-dependent 6-phosphofructokinase (319 aa).

Glycine 11 provides a ligand contact to ATP. 21–25 (RAVVR) lines the ADP pocket. Residues 72 to 73 (RS) and 102 to 105 (GDGS) contribute to the ATP site. Aspartate 103 contacts Mg(2+). 125–127 (TID) serves as a coordination point for substrate. The active-site Proton acceptor is aspartate 127. Residue arginine 154 coordinates ADP. Residues arginine 162 and 169–171 (MGR) each bind substrate. ADP-binding positions include 185–187 (GAE), arginine 211, and 213–215 (KKH). Residues glutamate 222, arginine 243, and 249–252 (HIQR) each bind substrate.

The protein belongs to the phosphofructokinase type A (PFKA) family. ATP-dependent PFK group I subfamily. Prokaryotic clade 'B1' sub-subfamily. Homotetramer. It depends on Mg(2+) as a cofactor.

The protein localises to the cytoplasm. The catalysed reaction is beta-D-fructose 6-phosphate + ATP = beta-D-fructose 1,6-bisphosphate + ADP + H(+). It participates in carbohydrate degradation; glycolysis; D-glyceraldehyde 3-phosphate and glycerone phosphate from D-glucose: step 3/4. Its activity is regulated as follows. Allosterically activated by ADP and other diphosphonucleosides, and allosterically inhibited by phosphoenolpyruvate. In terms of biological role, catalyzes the phosphorylation of D-fructose 6-phosphate to fructose 1,6-bisphosphate by ATP, the first committing step of glycolysis. The polypeptide is ATP-dependent 6-phosphofructokinase (Oceanobacillus iheyensis (strain DSM 14371 / CIP 107618 / JCM 11309 / KCTC 3954 / HTE831)).